An 893-amino-acid polypeptide reads, in one-letter code: Alanine--tRNA ligase (893 aa).

The protein belongs to the class-II aminoacyl-tRNA synthetase family.

Its subcellular location is the cytoplasm. The enzyme catalyses tRNA(Ala) + L-alanine + ATP = L-alanyl-tRNA(Ala) + AMP + diphosphate. Catalyzes the attachment of alanine to tRNA(Ala) in a two-step reaction: alanine is first activated by ATP to form Ala-AMP and then transferred to the acceptor end of tRNA(Ala). Also edits incorrectly charged Ser-tRNA(Ala) and Gly-tRNA(Ala) via its editing domain. The chain is Alanine--tRNA ligase (alaS) from Leuconostoc mesenteroides subsp. mesenteroides (strain ATCC 8293 / DSM 20343 / BCRC 11652 / CCM 1803 / JCM 6124 / NCDO 523 / NBRC 100496 / NCIMB 8023 / NCTC 12954 / NRRL B-1118 / 37Y).